The primary structure comprises 447 residues: Dihydroorotase (447 aa).

The Zn(2+) site is built by His-84 and His-86. Residues 86-88 (HLR) and Asn-118 contribute to the substrate site. Residues Asp-174, His-201, and His-255 each contribute to the Zn(2+) site. Asn-301 serves as a coordination point for substrate. Asp-328 contributes to the Zn(2+) binding site. Asp-328 is an active-site residue. Residues His-332 and 346 to 347 (FG) contribute to the substrate site.

Belongs to the metallo-dependent hydrolases superfamily. DHOase family. Class I DHOase subfamily. The cofactor is Zn(2+).

The catalysed reaction is (S)-dihydroorotate + H2O = N-carbamoyl-L-aspartate + H(+). Its pathway is pyrimidine metabolism; UMP biosynthesis via de novo pathway; (S)-dihydroorotate from bicarbonate: step 3/3. In terms of biological role, catalyzes the reversible cyclization of carbamoyl aspartate to dihydroorotate. This chain is Dihydroorotase, found in Anaplasma phagocytophilum (strain HZ).